The chain runs to 312 residues: Olfactory receptor 1D5 (312 aa).

Residues 1–25 lie on the Extracellular side of the membrane; it reads MDGDNQSENSQFLLLGISESPEQQQ. Asn5 is a glycosylation site (N-linked (GlcNAc...) asparagine). A helical membrane pass occupies residues 26 to 49; sequence ILFWMFLSMYLVTVLGNVLIILAI. The Cytoplasmic portion of the chain corresponds to 50–57; it reads SSDSHLHT. The helical transmembrane segment at 58 to 79 threads the bilayer; sequence PMYFFLANLSFTDLFFVTNTIP. Residues 80-100 lie on the Extracellular side of the membrane; the sequence is KMLVNFQSQNKAISYAGCLTQ. A disulfide bridge links Cys97 with Cys189. The helical transmembrane segment at 101 to 120 threads the bilayer; sequence LYFLVSLVTLDNLILAVMAY. Topologically, residues 121–140 are cytoplasmic; the sequence is DRYVAICCPLHYVTAMSPGL. The helical transmembrane segment at 141-158 threads the bilayer; it reads CVLLLSLCWGLSVLYGLL. Residues 159-196 are Extracellular-facing; it reads LTLLLTRVTFCGPREIHYLFCDMYILLRLACSNTHIIH. Residues 197–220 form a helical membrane-spanning segment; that stretch reads TVLVATGCFIFLTPLGFMTTSYVC. The Cytoplasmic segment spans residues 221 to 237; it reads IVRTILQIPSASKKYKA. Residues 238 to 260 traverse the membrane as a helical segment; it reads FSTCASHLGVVSLFYGTLAMVYL. The Extracellular segment spans residues 261-271; that stretch reads QPLHTYSMKDS. The helical transmembrane segment at 272–291 threads the bilayer; that stretch reads VATVMYAVVTPMMNPFIYSL. The Cytoplasmic segment spans residues 292–312; it reads RNKDMHGALGRVLRRLFQRPK.

The protein belongs to the G-protein coupled receptor 1 family.

The protein localises to the cell membrane. Its function is as follows. Odorant receptor. The chain is Olfactory receptor 1D5 (OR1D5) from Pan paniscus (Pygmy chimpanzee).